A 241-amino-acid polypeptide reads, in one-letter code: 2-C-methyl-D-erythritol 4-phosphate cytidylyltransferase (241 aa).

Belongs to the IspD/TarI cytidylyltransferase family. IspD subfamily.

It catalyses the reaction 2-C-methyl-D-erythritol 4-phosphate + CTP + H(+) = 4-CDP-2-C-methyl-D-erythritol + diphosphate. The protein operates within isoprenoid biosynthesis; isopentenyl diphosphate biosynthesis via DXP pathway; isopentenyl diphosphate from 1-deoxy-D-xylulose 5-phosphate: step 2/6. Functionally, catalyzes the formation of 4-diphosphocytidyl-2-C-methyl-D-erythritol from CTP and 2-C-methyl-D-erythritol 4-phosphate (MEP). This chain is 2-C-methyl-D-erythritol 4-phosphate cytidylyltransferase, found in Baumannia cicadellinicola subsp. Homalodisca coagulata.